The primary structure comprises 296 residues: GTP cyclohydrolase FolE2 (296 aa).

This sequence belongs to the GTP cyclohydrolase IV family.

The enzyme catalyses GTP + H2O = 7,8-dihydroneopterin 3'-triphosphate + formate + H(+). It participates in cofactor biosynthesis; 7,8-dihydroneopterin triphosphate biosynthesis; 7,8-dihydroneopterin triphosphate from GTP: step 1/1. Its function is as follows. Converts GTP to 7,8-dihydroneopterin triphosphate. The polypeptide is GTP cyclohydrolase FolE2 (Delftia acidovorans (strain DSM 14801 / SPH-1)).